We begin with the raw amino-acid sequence, 407 residues long: Protease ElaD (407 aa).

The active site involves His231. The active-site Nucleophile is the Cys317.

This sequence belongs to the peptidase C79 family.

In terms of biological role, protease that can act as an efficient and specific deubiquitinating enzyme in vitro. Does not possess desumoylating and deneddylating activities. The physiological substrate is unknown. In Escherichia coli O157:H7, this protein is Protease ElaD (elaD).